Reading from the N-terminus, the 559-residue chain is Non-homologous end joining factor IFFO1 (559 aa).

The disordered stretch occupies residues 21–57; that stretch reads GPLGDSLGGDHFAGGGDLPPAPLSPAGPAAYSPPGPG. Residues 39–57 are compositionally biased toward pro residues; the sequence is PPAPLSPAGPAAYSPPGPG. An LMNA binding region spans residues 65-116; sequence ALRNDLGSNINVLKTLNLRFRCFLAKVHELERRNRLLEKQLQQALEEGKQGR. In terms of domain architecture, IF rod spans 73 to 526; it reads NINVLKTLNL…RLITQSGDRK (454 aa). A coiled-coil region spans residues 85 to 117; it reads RCFLAKVHELERRNRLLEKQLQQALEEGKQGRR. The segment at 158-187 is disordered; sequence SPARSPAGPLAPSAASLSSSSTSTSTTYSS. A coiled-coil region spans residues 237–301; that stretch reads EIRALYNVLA…LKVEQLKAEL (65 aa). Positions 360-394 are disordered; the sequence is SMGGRKRERKAAVEEDTSLSESEGPRQPDGDEEES. Residues 450 to 525 are XCCR4 binding. Required for localization to the double-strand breaks (DSBs); the sequence is EQEDSLEKVI…RRLITQSGDR (76 aa). Residues 455–501 are a coiled coil; the sequence is LEKVIKDTESLFKTREKEYQETIDQIELELATAKNDMNRHLHEYMEM. The disordered stretch occupies residues 520-559; that stretch reads TQSGDRKSPAFTAVPLSDPPPPPSEAEDSDRDVSSDSSMR. Residues 550 to 559 are compositionally biased toward basic and acidic residues; it reads RDVSSDSSMR.

The protein belongs to the intermediate filament family. Forms a heterotetramer with XRCC4. The interaction with XRCC4 is direct, involves LIG4-free XRCC4 and leads to relocalization of IFFO1 at the double-strand break (DSB) sites. Interacts with LMNA; the interaction forms an interior nucleoskeleton and the recruitment to DNA double-strand breaks. In terms of tissue distribution, ubiquitously expressed.

It is found in the nucleus. The protein localises to the nucleoplasm. The protein resides in the nucleus inner membrane. Its subcellular location is the nucleus matrix. In terms of biological role, nuclear matrix protein involved in the immobilization of broken DNA ends and the suppression of chromosome translocation during DNA double-strand breaks (DSBs). Interacts with the nuclear lamina component LMNA, resulting in the formation of a nucleoskeleton that relocalizes to the DSB sites in a XRCC4-dependent manner and promotes the immobilization of the broken ends, thereby preventing chromosome translocation. Acts as a scaffold that allows the DNA repair protein XRCC4 and LMNA to assemble into a complex at the DSB sites. The chain is Non-homologous end joining factor IFFO1 from Homo sapiens (Human).